We begin with the raw amino-acid sequence, 418 residues long: MATKNSPSPKPMGTAQGDPGEAGTLPAPEAAGIRDTGSTQLKTKPKKIRKIKALVIDLGSQYCKCGYAGEPRPTYFISSTVGKRSAEMAADAGDNFKETYVGHELLNMEASLKLVNPLKHGVVVDWDCIQNIWEYIFHTAMKIMPEEHAVLVSDPPLSPTSNREKYAELLFETFGIPAMHVTSQALLSIYSYGKTSGLVVESGHGVSHVVPISEGDLLPGLPSRVDYAGCDLTNYLMQLLNEAGHKFSDDHLHIIEHIKKKCCYAALLPEEEMSLGLDELHVDYELPDGKIITIGQERFRCSEMLFKPSLVGCTQPGLPELTATCLARCQGTGFKEEMAANVLLCGGCTMLDGFPERFQRELSLLCPGDSPTVAAAPERKTSVWTGGSILASLQAFQQLWVSKEEFEERGCAAIYSKC.

The segment at 1–42 (MATKNSPSPKPMGTAQGDPGEAGTLPAPEAAGIRDTGSTQLK) is disordered. The residue at position 8 (Ser8) is a Phosphoserine.

It belongs to the actin family. Testis specific.

It is found in the cytoplasm. The protein localises to the cytoskeleton. This Mus musculus (Mouse) protein is Actin-like protein 7B (Actl7b).